The sequence spans 229 residues: uncharacterized protein (229 aa).

ATP is bound at residue 22–29 (GMIAFGKT).

This is an uncharacterized protein from Mycoplasma pneumoniae (strain ATCC 29342 / M129 / Subtype 1) (Mycoplasmoides pneumoniae).